The sequence spans 404 residues: Multidrug resistance protein MdtG (404 aa).

Transmembrane regions (helical) follow at residues 19-39 (LGCFLTGAAFSLVMPFLPLYV), 56-76 (LVFSITFLFSAIASPFWGGLA), 90-110 (LGMAIVMLLMGMAQNIWQFLI), 113-133 (ALLGLLGGFIPNANALIATQV), 144-164 (TLSTGGVSGALLGPLAGGLLA), 171-191 (PVFFITASVLFICFLLTFFFI), 222-242 (LFVTTLIIQVATGSIAPILTL), 254-274 (IAFISGMIASVPGVAALLSAP), 288-308 (ILIVALIISVLLLIPMSFVQT), 317-337 (FLLGAADGALLPAVQTLLVYN), and 376-396 (AVFCVTAGVVLFNAIYSWNSL).

It belongs to the major facilitator superfamily. DHA1 family. MdtG (TC 2.A.1.2.20) subfamily.

It is found in the cell inner membrane. This is Multidrug resistance protein MdtG from Salmonella dublin (strain CT_02021853).